The sequence spans 438 residues: Glycerophosphocholine cholinephosphodiesterase ENPP6 (438 aa).

A signal peptide spans 1–22 (MTRTLLKIYTLFILLLCRQRDA). Residues Asp-32, Ser-69, and Asn-90 each coordinate substrate. 2 residues coordinate Zn(2+): Asp-32 and Ser-69. Ser-69 functions as the Nucleophile in the catalytic mechanism. Ser-69 carries the post-translational modification Phosphoserine. Cysteines 140 and 152 form a disulfide. The stretch at 162–226 (KNLTDSMENA…ILNQKIREKN (65 aa)) forms a coiled coil. A glycan (N-linked (GlcNAc...) asparagine) is linked at Asn-163. Substrate is bound at residue Asp-191. The Zn(2+) site is built by Asp-191, His-195, Asp-238, and His-239. His-239 is a substrate binding site. Residues Asn-258, Asn-287, and Asn-339 are each glycosylated (N-linked (GlcNAc...) asparagine). His-352 serves as a coordination point for substrate. Residue His-352 coordinates Zn(2+). The N-linked (GlcNAc...) asparagine glycan is linked to Asn-402. Ser-415 is lipidated: GPI-anchor amidated serine. The propeptide at 416 to 438 (AATAGASLISCCFLLLLTLTGVC) is removed in mature form.

Belongs to the nucleotide pyrophosphatase/phosphodiesterase family. Zn(2+) serves as cofactor.

It is found in the cell membrane. It carries out the reaction sn-glycerol 3-phosphocholine + H2O = phosphocholine + glycerol + H(+). It catalyses the reaction a 1-acyl-sn-glycero-3-phosphocholine + H2O = a 1-acyl-sn-glycerol + phosphocholine + H(+). The enzyme catalyses a 1-O-alkyl-sn-glycero-3-phosphocholine + H2O = a 1-O-alkyl-sn-glycerol + phosphocholine + H(+). The catalysed reaction is 1-dodecanoyl-sn-glycero-3-phosphocholine + H2O = 1-dodecanoyl-sn-glycerol + phosphocholine + H(+). It carries out the reaction 1-hexadecanoyl-sn-glycero-3-phosphocholine + H2O = 1-hexadecanoyl-sn-glycerol + phosphocholine + H(+). It catalyses the reaction 1-(5Z,8Z,11Z,14Z-eicosatetraenoyl)-sn-glycero-3-phosphocholine + H2O = 1-(5Z,8Z,11Z,14Z-eicosatetraenoyl)-sn-glycerol + phosphocholine + H(+). The enzyme catalyses 1-tetradecanoyl-sn-glycero-3-phosphocholine + H2O = 1-tetradecanoyl-sn-glycerol + phosphocholine + H(+). The catalysed reaction is sphing-4-enine-phosphocholine + H2O = sphing-4-enine + phosphocholine + H(+). It carries out the reaction 1-(9Z-octadecenoyl)-sn-glycero-3-phosphocholine + H2O = 1-(9Z-octadecenoyl)-sn-glycerol + phosphocholine + H(+). It catalyses the reaction 1-(9Z,12Z)-octadecadienoyl-sn-glycero-3-phosphocholine + H2O = 1-(9Z,12Z-octadecadienoyl)-sn-glycerol + phosphocholine + H(+). The enzyme catalyses glycero-2-phosphocholine + H2O = phosphocholine + glycerol + H(+). In terms of biological role, choline-specific glycerophosphodiesterase that hydrolyzes glycerophosphocholine (GPC) and lysophosphatidylcholine (LPC) and contributes to supplying choline to the cells. Has a preference for LPC with short (12:0 and 14:0) or polyunsaturated (18:2 and 20:4) fatty acids. In vitro, hydrolyzes only choline-containing lysophospholipids, such as sphingosylphosphorylcholine (SPC), platelet-activating factor (PAF) and lysoPAF, but not other lysophospholipids. This Danio rerio (Zebrafish) protein is Glycerophosphocholine cholinephosphodiesterase ENPP6.